The following is a 310-amino-acid chain: Olfactory receptor 4D1 (310 aa).

Topologically, residues 1–25 are extracellular; it reads MEPQNTTQVSMFVLLGFSQTQELQK. An N-linked (GlcNAc...) asparagine glycan is attached at N5. A helical membrane pass occupies residues 26-49; that stretch reads FLFLLFLLVYVTTIVGNLLIMVTV. Residues 50–57 lie on the Cytoplasmic side of the membrane; that stretch reads TFDCRLHT. A helical transmembrane segment spans residues 58–79; sequence PMYFLLRNLALIDLCYSTVTSP. At 80–100 the chain is on the extracellular side; the sequence is KMLVDFLHETKTISYQGCMAQ. C97 and C189 are disulfide-bonded. The helical transmembrane segment at 101-120 threads the bilayer; sequence IFFFHLLGGGTVFFLSVMAY. The Cytoplasmic segment spans residues 121–139; the sequence is DRYIAISQPLRYVTIMNTQ. A helical transmembrane segment spans residues 140–158; that stretch reads LCVGLVVAAWVGGFVHSIV. Residues 159 to 195 lie on the Extracellular side of the membrane; that stretch reads QLALILPLPFCGPNILDNFYCDVPQVLRLACTDTSLL. The helical transmembrane segment at 196–219 threads the bilayer; it reads EFLMISNSGLLVIIWFLLLLISYT. Over 220–235 the chain is Cytoplasmic; it reads VILVMLRSHSGKARRK. The chain crosses the membrane as a helical span at residues 236–258; that stretch reads AASTCTTHIIVVSMIFIPCIYIY. The Extracellular segment spans residues 259-269; that stretch reads TWPFTPFLMDK. Residues 270–289 traverse the membrane as a helical segment; that stretch reads AVSISYTVMTPMLNPMIYTL. Residues 290–310 lie on the Cytoplasmic side of the membrane; it reads RNQDMKAAMRRLGKCLVICRE.

This sequence belongs to the G-protein coupled receptor 1 family.

Its subcellular location is the cell membrane. In terms of biological role, odorant receptor. The polypeptide is Olfactory receptor 4D1 (OR4D1) (Homo sapiens (Human)).